Consider the following 175-residue polypeptide: General stress protein 14 (175 aa).

The protein belongs to the NAD(P)H dehydrogenase (quinone) family.

This chain is General stress protein 14 (ywrO), found in Bacillus subtilis (strain 168).